A 116-amino-acid polypeptide reads, in one-letter code: Non-specific lipid-transfer protein C, cotyledon-specific isoform (116 aa).

The signal sequence occupies residues 1–24 (MKNVVFSVLLLLSFLFCLANTNEA). Intrachain disulfides connect Cys28-Cys76, Cys38-Cys53, Cys54-Cys98, and Cys74-Cys112.

Belongs to the plant LTP family.

Its function is as follows. Plant non-specific lipid-transfer proteins transfer phospholipids as well as galactolipids across membranes. May play a role in wax or cutin deposition in the cell walls of expanding epidermal cells and certain secretory tissues. This Ricinus communis (Castor bean) protein is Non-specific lipid-transfer protein C, cotyledon-specific isoform.